The primary structure comprises 89 residues: Conotoxin Bu5 (89 aa).

Positions 1–22 (MKLTCVLIVAVLFLTACQLATA) are cleaved as a signal peptide. A propeptide spanning residues 23–49 (ENSREEQGYSAVRSSDQIQDSDLKLTK) is cleaved from the precursor. Intrachain disulfides connect cysteine 51/cysteine 66, cysteine 58/cysteine 70, and cysteine 65/cysteine 79. The residue at position 79 (cysteine 79) is a Cysteine amide. Residues 80–89 (GVSIDYYDSR) constitute a propeptide that is removed on maturation.

This sequence belongs to the conotoxin O1 superfamily. Expressed by the venom duct.

It localises to the secreted. This is Conotoxin Bu5 from Conus bullatus (Bubble cone).